The primary structure comprises 90 residues: Putative toxin RelE1 (90 aa).

It belongs to the RelE toxin family.

Functionally, toxic component of a type II toxin-antitoxin (TA) system. Its cognate antitoxin is RelB1 (Potential). In Methanocaldococcus jannaschii (strain ATCC 43067 / DSM 2661 / JAL-1 / JCM 10045 / NBRC 100440) (Methanococcus jannaschii), this protein is Putative toxin RelE1 (relE1).